We begin with the raw amino-acid sequence, 323 residues long: MLPFKKADSPFKSNPVSRVGSSTRLNQLGNIKSNPTTPNAALYVTSSLNPSKNLPTNAANVKSRLQTQKDLDAFKQLPMVQKVNEYERLLNELSEAVSQFKNDELQEKIGQIITCNDVLKQQIEDLNKHRNYSYEVDKLSDRNKILEENSKFILKELVSYRNELKKLPKLPKSDKMVNRNVDVDDILKYAFKLAKFTKAPATVANMPFQIHPNNYVWPAEDSLRRGMLAQASLQAEEIIRHELGETDKENSNEVKTESKVDHDDDDDDEMEDVRISNENTNDEQRSKPPAASEHDTSKRKEEQNQQPVDLNLDLFDPDDEYSD.

The interval 1–36 (MLPFKKADSPFKSNPVSRVGSSTRLNQLGNIKSNPT) is disordered. The segment covering 11 to 36 (FKSNPVSRVGSSTRLNQLGNIKSNPT) has biased composition (polar residues). Positions 79-167 (MVQKVNEYER…VSYRNELKKL (89 aa)) form a coiled coil. 2 stretches are compositionally biased toward basic and acidic residues: residues 241-262 (HELG…KVDH) and 282-303 (DEQR…KEEQ). The tract at residues 241–323 (HELGETDKEN…LFDPDDEYSD (83 aa)) is disordered.

Belongs to the Mediator complex subunit 4 family. In terms of assembly, component of the Mediator complex.

It localises to the nucleus. Component of the Mediator complex, a coactivator involved in the regulated transcription of nearly all RNA polymerase II-dependent genes. Mediator functions as a bridge to convey information from gene-specific regulatory proteins to the basal RNA polymerase II transcription machinery. Mediator is recruited to promoters by direct interactions with regulatory proteins and serves as a scaffold for the assembly of a functional preinitiation complex with RNA polymerase II and the general transcription factors. This chain is Mediator of RNA polymerase II transcription subunit 4 (MED4), found in Candida albicans (strain SC5314 / ATCC MYA-2876) (Yeast).